We begin with the raw amino-acid sequence, 489 residues long: Rhamnulokinase (489 aa).

Position 13 to 17 (13 to 17) interacts with ATP; it reads ASSGR. Cys68 and Cys222 are oxidised to a cystine. Residues Gly83 and 236–238 contribute to the substrate site; that span reads HDT. The active-site Proton acceptor is the Asp237. Thr259 provides a ligand contact to ATP. Residue Asn296 coordinates substrate. Gln304 is an ATP binding site. Cys353 and Cys370 are oxidised to a cystine. An ATP-binding site is contributed by Gly402. A disulfide bond links Cys413 and Cys417.

It belongs to the rhamnulokinase family. Requires Mg(2+) as cofactor.

It catalyses the reaction L-rhamnulose + ATP = L-rhamnulose 1-phosphate + ADP + H(+). It functions in the pathway carbohydrate degradation; L-rhamnose degradation; glycerone phosphate from L-rhamnose: step 2/3. Functionally, involved in the catabolism of L-rhamnose (6-deoxy-L-mannose). Catalyzes the transfer of the gamma-phosphate group from ATP to the 1-hydroxyl group of L-rhamnulose to yield L-rhamnulose 1-phosphate. This chain is Rhamnulokinase, found in Salmonella agona (strain SL483).